The chain runs to 248 residues: DNA repair protein RecO (248 aa).

It belongs to the RecO family.

Its function is as follows. Involved in DNA repair and RecF pathway recombination. This is DNA repair protein RecO from Bartonella tribocorum (strain CIP 105476 / IBS 506).